Consider the following 72-residue polypeptide: Cell division protein ZapB (72 aa).

Positions 1 to 72 form a coiled coil; the sequence is MSSEILDQLE…RSLLGQIDNV (72 aa).

The protein belongs to the ZapB family. Homodimer. The ends of the coiled-coil dimer bind to each other, forming polymers. Interacts with FtsZ.

The protein localises to the cytoplasm. Non-essential, abundant cell division factor that is required for proper Z-ring formation. It is recruited early to the divisome by direct interaction with FtsZ, stimulating Z-ring assembly and thereby promoting cell division earlier in the cell cycle. Its recruitment to the Z-ring requires functional FtsA or ZipA. The polypeptide is Cell division protein ZapB (Actinobacillus succinogenes (strain ATCC 55618 / DSM 22257 / CCUG 43843 / 130Z)).